A 1042-amino-acid chain; its full sequence is MEQDTAAVAATVAAADATATIVVIEDEQPGPSTSQEEGAAAAATEATAATEKGEKKKEKNVSSFQLKLAAKAPKSEKEMDPEYEEKMKADRAKRFEFLLKQTELFAHFIQPSAQKSPTSPLNMKLGRPRIKKDEKQSLISAGDYRHRRTEQEEDEELLSESRKTSNVCIRFEVSPSYVKGGPLRDYQIRGLNWLISLYENGVNGILADEMGLGKTLQTIALLGYLKHYRNIPGPHMVLVPKSTLHNWMNEFKRWVPSLRVICFVGDKDARAAFIRDEMMPGEWDVCVTSYEMVIKEKSVFKKFHWRYLVIDEAHRIKNEKSKLSEIVREFKSTNRLLLTGTPLQNNLHELWALLNFLLPDVFNSADDFDSWFDTKNCLGDQKLVERLHAVLKPFLLRRIKTDVEKSLPPKKEIKIYLGLSKMQREWYTKILMKDIDVLNSSGKMDKMRLLNILMQLRKCCNHPYLFDGAEPGPPYTTDEHIVSNSGKMVVLDKLLAKLKEQGSRVLIFSQMTRLLDILEDYCMWRGYEYCRLDGQTPHEEREEAIEAFNAPNSSKFIFMLSTRAGGLGINLASADVVILYDSDWNPQVDLQAMDRAHRIGQKKPVRVFRLITDNTVEERIVERAEIKLRLDSIVIQQGRLIDQQSNKLAKEEMLQMIRHGATHVFASKESELTDEDITTILERGEKKTAEMNERLQKMGESSLRNFRMDIEQSLYKFEGEDYREKQKLGMVEWIEPPKRERKANYAVDAYFREALRVSEPKIPKAPRPPKQPNVQDFQFFPPRLFELLEKEILYYRKTIGYKVPRNPDIPNPALAQREEQKKIDGAEPLTPEETEEKEKLLTQGFTNWTKRDFNQFIKANEKYGRDDIDNIAREVEGKSPEEVMEYSAVFWERCNELQDIEKIMAQIERGEARIQRRISIKKALDAKIARYKAPFHQLRIQYGTSKGKNYTEEEDRFLICMLHKMGFDRENVYEELRQCVRNAPQFRFDWFIKSRTAMEFQRRCNTLISLIEKENMEIEERERAEKKKRATKTPMVKFSAFS.

The tract at residues glutamate 25 to glutamate 82 is disordered. A compositionally biased stretch (low complexity) spans glutamate 36–threonine 50. Composition is skewed to basic and acidic residues over residues glutamate 51–asparagine 60 and proline 73–glutamate 82. Phosphoserine occurs at positions 116 and 119. The region spanning isoleucine 195–aspartate 360 is the Helicase ATP-binding domain. Position 208 to 215 (aspartate 208 to threonine 215) interacts with ATP. The DEAH box signature appears at aspartate 311 to histidine 314. One can recognise a Helicase C-terminal domain in the interval valine 490–isoleucine 641. Glycyl lysine isopeptide (Lys-Gly) (interchain with G-Cter in SUMO2) cross-links involve residues lysine 650, lysine 716, and lysine 738. The disordered stretch occupies residues glutamate 819–threonine 849. A compositionally biased stretch (basic and acidic residues) spans proline 828–lysine 837. In terms of domain architecture, SANT 1 spans glutamine 843–asparagine 895. At tyrosine 942 the chain carries Phosphotyrosine. Residues lysine 946–leucine 1010 enclose the SANT 2 domain.

Belongs to the SNF2/RAD54 helicase family. ISWI subfamily. May form homodimers. Component of the ACF-1 ISWI chromatin remodeling complex at least composed of SMARCA1 and BAZ1A, which regulates the spacing of histone octamers on the DNA template to facilitate access to DNA. Within the complex interacts with BAZ1A; the interaction is direct. Component of the WICH-1 ISWI chromatin remodeling complex at least composed of SMARCA1 and BAZ1B/WSTF. Within the complex interacts with BAZ1B/WSTF. Component of the NoRC-1 ISWI chromatin remodeling complex at least composed of SMARCA1 and BAZ2A/TIP5. Within the complex interacts with BAZ2A/TIP5. Component of the BRF-1 ISWI chromatin remodeling complex at least composed of SMARCA1 and BAZ2B. Within the complex interacts with BAZ2B. Component of the NURF-1 ISWI chromatin remodeling complex (also called the nucleosome-remodeling factor (NURF) complex) at least composed of SMARCA1, BPTF, RBBP4 and RBBP7. Within the complex interacts with BPTF. Within the complex interacts with RBBP4 and RBBP7. Component of the CERF-1 ISWI chromatin remodeling complex (also called the CECR2-containing-remodeling factor (CERF) complex) at least composed of CECR2 and SMARCA1. LUZP1 is detected as part of the CERF-1 complex in embryonic stem cells where it is involved in complex stabilization but is not detected in the complex in the testis. Component of the RSF-1 ISWI chromatin remodeling complex at least composed of SMARCA1 and RSF1. Within the complex interacts with RSF1. Interacts with PRLR. Interacts with ERCC6. As to quaternary structure, may form homodimers. Component of the BPFT-SMARCA1 complex at least composed of SMARCA1, BPFT, RBBP4 and RBBP7; the complex is catalytically inactive and does not remodel chromatin. Within the complex interacts with BPTF, RBBP4 and RBBP7. Component of the BAZ1A-1-SMARCA1 complex at least composed of SMARCA1 and BAZ1A; the complex is catalytically inactive and does not remodel chromatin. Component of the BAZ1B-1-SMARCA1 complex at least composed of SMARCA1 and BAZ1B; the complex is catalytically inactive and does not remodel chromatin. In terms of tissue distribution, expressed in lung, breast, kidney, ovary, skeletal muscle and brain. Mainly expressed in non-neuronal tissues such as lung, breast, kidney, and ovary.

Its subcellular location is the nucleus. It localises to the chromosome. It carries out the reaction ATP + H2O = ADP + phosphate + H(+). In terms of biological role, ATPase that possesses intrinsic ATP-dependent chromatin-remodeling activity. ATPase activity is substrate-dependent, and is increased when nucleosomes are the substrate, but is also catalytically active when DNA alone is the substrate. Catalytic subunit of ISWI chromatin-remodeling complexes, which form ordered nucleosome arrays on chromatin and facilitate access to DNA during DNA-templated processes such as DNA replication, transcription, and repair. Within the ISWI chromatin-remodeling complexes, slides edge- and center-positioned histone octamers away from their original location on the DNA template. Catalytic activity and histone octamer sliding propensity is regulated and determined by components of the ISWI chromatin-remodeling complexes. The BAZ1A-, BAZ1B-, BAZ2A- and BAZ2B-containing ISWI chromatin-remodeling complexes regulate the spacing of nucleosomes along the chromatin and have the ability to slide mononucleosomes to the center of a DNA template. The CECR2- and RSF1-containing ISWI chromatin-remodeling complexes do not have the ability to slide mononucleosomes to the center of a DNA template. Within the NURF-1 and CERF-1 ISWI chromatin remodeling complexes, nucleosomes are the preferred substrate for its ATPase activity. Within the NURF-1 ISWI chromatin-remodeling complex, binds to the promoters of En1 and En2 to positively regulate their expression and promote brain development. May promote neurite outgrowth. May be involved in the development of luteal cells. Facilitates nucleosome assembly during DNA replication, ensuring replication fork progression and genomic stability by preventing replication stress and nascent DNA gaps. Catalytically inactive when either DNA or nucleosomes are the substrate and does not possess chromatin-remodeling activity. Acts as a negative regulator of chromatin remodelers by generating inactive complexes. This chain is SWI/SNF-related matrix-associated actin-dependent regulator of chromatin subfamily A member 1, found in Homo sapiens (Human).